Reading from the N-terminus, the 483-residue chain is UDP-N-acetylmuramoyl-L-alanyl-D-glutamate--2,6-diaminopimelate ligase (483 aa).

Residue S30 coordinates UDP-N-acetyl-alpha-D-muramoyl-L-alanyl-D-glutamate. Residue 109-115 (GTNGKTT) coordinates ATP. UDP-N-acetyl-alpha-D-muramoyl-L-alanyl-D-glutamate contacts are provided by residues 151–152 (TT), S178, and R186. K218 is modified (N6-carboxylysine). Meso-2,6-diaminopimelate-binding positions include R380, 403-406 (DNPR), G453, and E457. The Meso-diaminopimelate recognition motif signature appears at 403 to 406 (DNPR).

Belongs to the MurCDEF family. MurE subfamily. Requires Mg(2+) as cofactor. Carboxylation is probably crucial for Mg(2+) binding and, consequently, for the gamma-phosphate positioning of ATP.

It localises to the cytoplasm. The catalysed reaction is UDP-N-acetyl-alpha-D-muramoyl-L-alanyl-D-glutamate + meso-2,6-diaminopimelate + ATP = UDP-N-acetyl-alpha-D-muramoyl-L-alanyl-gamma-D-glutamyl-meso-2,6-diaminopimelate + ADP + phosphate + H(+). It functions in the pathway cell wall biogenesis; peptidoglycan biosynthesis. In terms of biological role, catalyzes the addition of meso-diaminopimelic acid to the nucleotide precursor UDP-N-acetylmuramoyl-L-alanyl-D-glutamate (UMAG) in the biosynthesis of bacterial cell-wall peptidoglycan. This Chlamydia pneumoniae (Chlamydophila pneumoniae) protein is UDP-N-acetylmuramoyl-L-alanyl-D-glutamate--2,6-diaminopimelate ligase.